The primary structure comprises 398 residues: Probable L-tyrosine/L-aspartate decarboxylase (398 aa).

Lysine 242 is subject to N6-(pyridoxal phosphate)lysine.

This sequence belongs to the group II decarboxylase family. MfnA subfamily. It depends on pyridoxal 5'-phosphate as a cofactor.

The enzyme catalyses L-tyrosine + H(+) = tyramine + CO2. It catalyses the reaction L-aspartate + H(+) = beta-alanine + CO2. It participates in cofactor biosynthesis; methanofuran biosynthesis. Its pathway is cofactor biosynthesis; coenzyme A biosynthesis. Functionally, catalyzes the decarboxylation of L-tyrosine to produce tyramine for methanofuran biosynthesis. Can also catalyze the decarboxylation of L-aspartate to produce beta-alanine for coenzyme A (CoA) biosynthesis. This Methanosarcina mazei (strain ATCC BAA-159 / DSM 3647 / Goe1 / Go1 / JCM 11833 / OCM 88) (Methanosarcina frisia) protein is Probable L-tyrosine/L-aspartate decarboxylase.